The primary structure comprises 117 residues: Large ribosomal subunit protein bL20 (117 aa).

It belongs to the bacterial ribosomal protein bL20 family.

Its function is as follows. Binds directly to 23S ribosomal RNA and is necessary for the in vitro assembly process of the 50S ribosomal subunit. It is not involved in the protein synthesizing functions of that subunit. The sequence is that of Large ribosomal subunit protein bL20 from Photobacterium profundum (strain SS9).